A 388-amino-acid chain; its full sequence is Succinate--CoA ligase [ADP-forming] subunit beta (388 aa).

One can recognise an ATP-grasp domain in the interval 9-244 (KQLFAEYGLP…PSQDDPREAH (236 aa)). ATP contacts are provided by residues K46, 53 to 55 (GRG), E99, T102, and E107. Mg(2+) is bound by residues N199 and D213. Substrate-binding positions include N264 and 321-323 (GIV).

This sequence belongs to the succinate/malate CoA ligase beta subunit family. In terms of assembly, heterotetramer of two alpha and two beta subunits. Requires Mg(2+) as cofactor.

The enzyme catalyses succinate + ATP + CoA = succinyl-CoA + ADP + phosphate. It carries out the reaction GTP + succinate + CoA = succinyl-CoA + GDP + phosphate. It functions in the pathway carbohydrate metabolism; tricarboxylic acid cycle; succinate from succinyl-CoA (ligase route): step 1/1. Its function is as follows. Succinyl-CoA synthetase functions in the citric acid cycle (TCA), coupling the hydrolysis of succinyl-CoA to the synthesis of either ATP or GTP and thus represents the only step of substrate-level phosphorylation in the TCA. The beta subunit provides nucleotide specificity of the enzyme and binds the substrate succinate, while the binding sites for coenzyme A and phosphate are found in the alpha subunit. The protein is Succinate--CoA ligase [ADP-forming] subunit beta of Pseudomonas putida (strain GB-1).